The chain runs to 239 residues: Phosphoglycolate phosphatase (239 aa).

Aspartate 9 (nucleophile) is an active-site residue. Residues aspartate 9 and aspartate 11 each contribute to the Mg(2+) site. Lysine 157 is a binding site for substrate. Positions 180 and 184 each coordinate Mg(2+).

The protein belongs to the archaeal SPP-like hydrolase family. The cofactor is Mg(2+).

It catalyses the reaction 2-phosphoglycolate + H2O = glycolate + phosphate. Catalyzes the dephosphorylation of 2-phosphoglycolate. This Thermococcus kodakarensis (strain ATCC BAA-918 / JCM 12380 / KOD1) (Pyrococcus kodakaraensis (strain KOD1)) protein is Phosphoglycolate phosphatase.